The chain runs to 264 residues: Zinc import ATP-binding protein ZnuC (264 aa).

In terms of domain architecture, ABC transporter spans 11-226 (IELKGVNVTF…PVFIRFFGNQ (216 aa)). 43–50 (GPNGGGKS) contributes to the ATP binding site.

It belongs to the ABC transporter superfamily. Zinc importer (TC 3.A.1.15.5) family. The complex is composed of two ATP-binding proteins (ZnuC), two transmembrane proteins (ZnuB) and a solute-binding protein (ZnuA).

It localises to the cell inner membrane. The catalysed reaction is Zn(2+)(out) + ATP(in) + H2O(in) = Zn(2+)(in) + ADP(in) + phosphate(in) + H(+)(in). In terms of biological role, part of the ABC transporter complex ZnuABC involved in zinc import. Responsible for energy coupling to the transport system. The chain is Zinc import ATP-binding protein ZnuC from Histophilus somni (strain 129Pt) (Haemophilus somnus).